We begin with the raw amino-acid sequence, 252 residues long: Imidazole glycerol phosphate synthase subunit HisF (252 aa).

Catalysis depends on residues aspartate 11 and aspartate 130.

It belongs to the HisA/HisF family. As to quaternary structure, heterodimer of HisH and HisF.

The protein resides in the cytoplasm. The catalysed reaction is 5-[(5-phospho-1-deoxy-D-ribulos-1-ylimino)methylamino]-1-(5-phospho-beta-D-ribosyl)imidazole-4-carboxamide + L-glutamine = D-erythro-1-(imidazol-4-yl)glycerol 3-phosphate + 5-amino-1-(5-phospho-beta-D-ribosyl)imidazole-4-carboxamide + L-glutamate + H(+). It participates in amino-acid biosynthesis; L-histidine biosynthesis; L-histidine from 5-phospho-alpha-D-ribose 1-diphosphate: step 5/9. In terms of biological role, IGPS catalyzes the conversion of PRFAR and glutamine to IGP, AICAR and glutamate. The HisF subunit catalyzes the cyclization activity that produces IGP and AICAR from PRFAR using the ammonia provided by the HisH subunit. The polypeptide is Imidazole glycerol phosphate synthase subunit HisF (Staphylococcus aureus (strain bovine RF122 / ET3-1)).